The chain runs to 312 residues: Protein-methionine-sulfoxide reductase catalytic subunit MsrP (312 aa).

Residues 1–42 constitute a signal peptide (tat-type signal); that stretch reads MALFRYPRPLPSEITPRDMYLSRRSLIGGAAALGAVSATADA. Mo-molybdopterin-binding positions include N68, 71-72, C126, S161, N211, R216, and 227-229; these read YE and GIK.

It belongs to the MsrP family. In terms of assembly, heterodimer of a catalytic subunit (MsrP) and a heme-binding subunit (MsrQ). Mo-molybdopterin is required as a cofactor. In terms of processing, predicted to be exported by the Tat system. The position of the signal peptide cleavage has not been experimentally proven.

It is found in the periplasm. It catalyses the reaction L-methionyl-[protein] + a quinone + H2O = L-methionyl-(S)-S-oxide-[protein] + a quinol. It carries out the reaction L-methionyl-[protein] + a quinone + H2O = L-methionyl-(R)-S-oxide-[protein] + a quinol. Its function is as follows. Part of the MsrPQ system that repairs oxidized periplasmic proteins containing methionine sulfoxide residues (Met-O), using respiratory chain electrons. Thus protects these proteins from oxidative-stress damage caused by reactive species of oxygen and chlorine generated by the host defense mechanisms. MsrPQ is essential for the maintenance of envelope integrity under bleach stress, rescuing a wide series of structurally unrelated periplasmic proteins from methionine oxidation. The catalytic subunit MsrP is non-stereospecific, being able to reduce both (R-) and (S-) diastereoisomers of methionine sulfoxide. In Gluconobacter oxydans (strain 621H) (Gluconobacter suboxydans), this protein is Protein-methionine-sulfoxide reductase catalytic subunit MsrP.